We begin with the raw amino-acid sequence, 99 residues long: DNA-binding protein HU (99 aa).

Positions 67–86 (REGRNPKTGAKMKIDAYNQP) are disordered.

It belongs to the bacterial histone-like protein family. In terms of assembly, homodimer.

Functionally, histone-like DNA-binding protein which is capable of wrapping DNA to stabilize it, and thus to prevent its denaturation under extreme environmental conditions. The chain is DNA-binding protein HU (hup) from Rickettsia conorii (strain ATCC VR-613 / Malish 7).